A 312-amino-acid polypeptide reads, in one-letter code: tRNA uridine(34) hydroxylase (312 aa).

A Rhodanese domain is found at 124–218 (SDPEVLLIDT…YLEEVPQEQT (95 aa)). The Cysteine persulfide intermediate role is filled by Cys178. Basic and acidic residues-rich tracts occupy residues 279–294 (TRESARERQKQIELAR) and 302–312 (IGRDPRQLNEA). The disordered stretch occupies residues 279-312 (TRESARERQKQIELARARNQPHPIGRDPRQLNEA).

This sequence belongs to the TrhO family.

The catalysed reaction is uridine(34) in tRNA + AH2 + O2 = 5-hydroxyuridine(34) in tRNA + A + H2O. Functionally, catalyzes oxygen-dependent 5-hydroxyuridine (ho5U) modification at position 34 in tRNAs. The sequence is that of tRNA uridine(34) hydroxylase from Ectopseudomonas mendocina (strain ymp) (Pseudomonas mendocina).